The primary structure comprises 146 residues: Protein ADM2 (146 aa).

Positions 1–25 are cleaved as a signal peptide; the sequence is MAQLLMVTVTFGCISLLYLLPGTLS. The propeptide occupies 26–96; that stretch reads GSLGKGLRPR…HPGPQRHVGS (71 aa). The interval 29–99 is disordered; the sequence is GKGLRPREPP…PQRHVGSRRP (71 aa). Cysteines 108 and 113 form a disulfide. Tyrosine amide is present on tyrosine 145.

The protein belongs to the adrenomedullin family. As to expression, expression was restricted to the intermediate and anterior lobes of the pituitary.

Its subcellular location is the secreted. Intermedin/ADM2 is a peptide hormone that plays a role as physiological regulator of gastrointestinal and cardiovascular bioactivities mediated by the CALCRL-RAMPs receptor complexes. Activates the cAMP-dependent pathway through interaction with CALCRL-RAMP3 receptor complex. This is Protein ADM2 from Rattus norvegicus (Rat).